Here is a 274-residue protein sequence, read N- to C-terminus: Bis(5'-nucleosyl)-tetraphosphatase, symmetrical (274 aa).

Belongs to the Ap4A hydrolase family.

It carries out the reaction P(1),P(4)-bis(5'-adenosyl) tetraphosphate + H2O = 2 ADP + 2 H(+). Hydrolyzes diadenosine 5',5'''-P1,P4-tetraphosphate to yield ADP. This Buchnera aphidicola subsp. Acyrthosiphon pisum (strain 5A) protein is Bis(5'-nucleosyl)-tetraphosphatase, symmetrical.